Here is a 503-residue protein sequence, read N- to C-terminus: Discoidin, CUB and LCCL domain-containing protein 1 (503 aa).

Positions 1–25 are cleaved as a signal peptide; the sequence is MGTGAGGPSVLALLFAVCAPLRLQA. The Extracellular portion of the chain corresponds to 26–250; that stretch reads EELGDGCGHI…FTTPGMNITT (225 aa). Disulfide bonds link cysteine 32/cysteine 59, cysteine 85/cysteine 103, cysteine 149/cysteine 165, and cysteine 169/cysteine 191. One can recognise a CUB domain in the interval 32–141; sequence CGHIVTSQDS…RGFLLTYASS (110 aa). Asparagine 55 is a glycosylation site (N-linked (GlcNAc...) asparagine). An LCCL domain is found at 143 to 239; the sequence is HPDLITCLER…RHGSLSEKRF (97 aa). Asparagine 247 carries an N-linked (GlcNAc...) asparagine glycan. Residues 251–271 traverse the membrane as a helical segment; it reads VAIPSVIFIALLLTGMGIFAI. Residues 272-503 are Cytoplasmic-facing; it reads CRKRKKKGNP…LNQTAMTALL (232 aa). Phosphoserine is present on serine 305. Residue threonine 406 is modified to Phosphothreonine. The interval 410 to 503 is disordered; the sequence is QSGYRVPGPR…LNQTAMTALL (94 aa). The segment covering 494–503 has biased composition (polar residues); that stretch reads LNQTAMTALL.

It localises to the membrane. This chain is Discoidin, CUB and LCCL domain-containing protein 1 (Dcbld1), found in Mus musculus (Mouse).